A 443-amino-acid polypeptide reads, in one-letter code: UDP-N-acetylmuramate--L-alanine ligase (443 aa).

Glycine 110 to serine 116 contacts ATP.

This sequence belongs to the MurCDEF family.

It is found in the cytoplasm. The catalysed reaction is UDP-N-acetyl-alpha-D-muramate + L-alanine + ATP = UDP-N-acetyl-alpha-D-muramoyl-L-alanine + ADP + phosphate + H(+). Its pathway is cell wall biogenesis; peptidoglycan biosynthesis. Functionally, cell wall formation. The sequence is that of UDP-N-acetylmuramate--L-alanine ligase from Streptococcus agalactiae serotype Ia (strain ATCC 27591 / A909 / CDC SS700).